Consider the following 1773-residue polypeptide: Zinc finger CCCH domain-containing protein 19 (1773 aa).

A disordered region spans residues Ser145–Leu166. Over residues Asp147–Ser156 the composition is skewed to basic and acidic residues. Positions Gly196–Thr218 form a coiled coil. Disordered regions lie at residues Ile270–Glu290, Asp361–Thr409, and Ile434–Lys591. 2 stretches are compositionally biased toward basic and acidic residues: residues Gly273–Val286 and Asp361–Glu378. A coiled-coil region spans residues Ala403–Met437. 2 stretches are compositionally biased toward basic and acidic residues: residues Met444–Asn455 and Lys497–Arg513. 2 stretches are compositionally biased toward acidic residues: residues Ile514–Ala529 and Glu551–Glu572. A compositionally biased stretch (basic residues) spans Gly578–Lys588. Positions Arg581–Lys588 match the Nuclear localization signal 1 motif. The PHD-type zinc-finger motif lies at Glu599 to Ser665. Residues Ala741–Asn751 are compositionally biased toward basic and acidic residues. Residues Ala741–Asp797 form a disordered region. Positions Ala752–Asp762 are enriched in polar residues. An SWIB/MDM2 domain is found at Ser801 to Lys884. Residues Pro903–Gly919 show a composition bias toward basic and acidic residues. Positions Pro903–Arg935 are disordered. Residues Lys920–Arg935 are compositionally biased toward basic residues. The Nuclear localization signal 2 signature appears at Asp921–Lys928. Residues Ala944–Val1076 enclose the Plus3 domain. The span at Glu1139–Pro1152 shows a compositional bias: basic and acidic residues. The interval Glu1139 to Ala1274 is disordered. Acidic residues predominate over residues Asp1153 to Glu1163. Over residues Phe1193–Arg1212 the composition is skewed to polar residues. Position 1281 is a phosphoserine (Ser1281). Residues Glu1307–Ala1361 form the GYF domain. Polar residues-rich tracts occupy residues Arg1409–Thr1433, Ser1441–Thr1469, Val1499–Ser1509, and Ser1518–Gly1528. Disordered stretches follow at residues Arg1409–Thr1469, Gln1485–Gln1605, and Gly1649–Asn1746. Positions Ser1529–Pro1555 are enriched in low complexity. Residues Ser1569 to Trp1579 are compositionally biased toward polar residues. Low complexity-rich tracts occupy residues Asn1585–Ser1602 and Gln1666–Ala1677. The segment covering Gly1678–Ile1708 has biased composition (polar residues). Low complexity predominate over residues Gly1722 to Gly1735. A compositionally biased stretch (polar residues) spans Asn1737–Asn1746. Residues Phe1747 to Asn1773 form a C3H1-type zinc finger.

As to quaternary structure, interacts with unmethylated histone H3 and AGO2. The interaction with AGO2 in required to direct DNA methylation and silencing. In terms of tissue distribution, expressed in seedlings, mostly in the vasculature and shoot apices of young seedlings.

Its subcellular location is the nucleus. In terms of biological role, plays a central role in integrating RNA silencing and chromatin signals in 21 nt siRNA-dependent DNA methylation on cytosine pathway leading to transcriptional gene silencing of specific sequences. Involved in a chromatin-based RNA silencing pathway that encompasses both post-transcriptional gene silencing (PTGS) (e.g. RDR1, RDR6 and AGO2) and transcriptional gene silencing (TGS) (e.g. siRNA-dependent DNA methylation and histone H3) components. Mediates siRNA accumulation at specific chromatin loci. Binds H3K4me0 through its PHD to enforce low levels of H3K4 methylation and gene silencing at a subset of genomic loci. This chain is Zinc finger CCCH domain-containing protein 19 (NERD), found in Arabidopsis thaliana (Mouse-ear cress).